A 153-amino-acid chain; its full sequence is Allergen Pet c 1 (153 aa).

The protein belongs to the BetVI family. As to quaternary structure, may form dimers.

This is Allergen Pet c 1 from Petroselinum crispum (Parsley).